The chain runs to 420 residues: Histidine--tRNA ligase (420 aa).

The protein belongs to the class-II aminoacyl-tRNA synthetase family. As to quaternary structure, homodimer.

The protein resides in the cytoplasm. The enzyme catalyses tRNA(His) + L-histidine + ATP = L-histidyl-tRNA(His) + AMP + diphosphate + H(+). In Mycoplasmopsis pulmonis (strain UAB CTIP) (Mycoplasma pulmonis), this protein is Histidine--tRNA ligase (hisS).